We begin with the raw amino-acid sequence, 445 residues long: MGGGGQLGESGENGCKSAAGVYTWEEVQHHSNRNDQWLVIDRKVYNVTQWAKRHPGGFRVLNHYAGEDATEAFTAFHPDIKFVQKYMKPLLVGELAATEPSQDQDKNAALIQDFHTLRQQAESEGLFQARPLFFLLHLGHILLLEALALLMVWHWGTGWLQTLLCAVMLATAQSQAGWLQHDFGHLSVFKKSRWNHLVHKFVIGHLKGASANWWNHRHFQHHAKPNIFKKDPDINMVDLFVLGETQPVEYGIKKIKNMPYNHQHKYFFLVAPPLLIPVFYNYNIMMTMITRRDYVDLSWAMTFYIRYMLCYVPVYGLFGSLALMMFARFLESHWFVWVTQMSHLPMDIDNDKRRDWLSMQLQATCNIEKSFFNDWFSGHLNFQIEHHLFPRMPRHNYHLVAPQVQTLCEKHGIPYEVKTLWKGMVDVVRALKKSGDLWLDAYLHK.

A Cytochrome b5 heme-binding domain is found at 19-96; it reads AGVYTWEEVQ…MKPLLVGELA (78 aa). 4 helical membrane passes run 132–152, 153–173, 266–286, and 307–327; these read LFFL…LLMV, WHWG…ATAQ, YFFL…NIMM, and YMLC…MMFA.

Belongs to the fatty acid desaturase type 1 family.

Its subcellular location is the membrane. The catalysed reaction is (8Z,11Z,14Z,17Z)-eicosatetraenoyl-CoA + 2 Fe(II)-[cytochrome b5] + O2 + 2 H(+) = (5Z,8Z,11Z,14Z,17Z)-eicosapentaenoyl-CoA + 2 Fe(III)-[cytochrome b5] + 2 H2O. It carries out the reaction (7Z,10Z,13Z,16Z)-docosatetraenoyl-CoA + 2 Fe(II)-[cytochrome b5] + O2 + 2 H(+) = (4Z,7Z,10Z,13Z,16Z)-docosapentaenoyl-CoA + 2 Fe(III)-[cytochrome b5] + 2 H2O. It catalyses the reaction (7Z,10Z,13Z,16Z,19Z)-docosapentaenoyl-CoA + 2 Fe(II)-[cytochrome b5] + O2 + 2 H(+) = (4Z,7Z,10Z,13Z,16Z,19Z)-docosahexaenoyl-CoA + 2 Fe(III)-[cytochrome b5] + 2 H2O. The protein operates within lipid metabolism; polyunsaturated fatty acid biosynthesis. Fatty acid desaturase with bifunctional delta-4 and delta-5 activities. Component of a lipid metabolic pathway that catalyzes the biosynthesis of polyunsaturated fatty acids (PUFA) with preference toward n-3 substrates and Delta(4)function. In Siganus canaliculatus (White-spotted spinefoot), this protein is Acyl-CoA Delta-4 desaturase.